A 165-amino-acid chain; its full sequence is Ureidoglycolate lyase (165 aa).

The protein belongs to the ureidoglycolate lyase family. Homodimer. Requires Ni(2+) as cofactor.

The enzyme catalyses (S)-ureidoglycolate = urea + glyoxylate. The protein operates within nitrogen metabolism; (S)-allantoin degradation. Its function is as follows. Catalyzes the catabolism of the allantoin degradation intermediate (S)-ureidoglycolate, generating urea and glyoxylate. Involved in the utilization of allantoin as nitrogen source. The chain is Ureidoglycolate lyase from Chelativorans sp. (strain BNC1).